Reading from the N-terminus, the 585-residue chain is Eukaryotic translation initiation factor 3 subunit D (585 aa).

The span at 110-130 shows a compositional bias: gly residues; it reads GGGTVFRGRGQRGVGQRGGRA. The segment at 110–152 is disordered; sequence GGGTVFRGRGQRGVGQRGGRAGFQRVGAGRGQGGDRYYDNRSA. An RNA gate region spans residues 300 to 314; the sequence is SIDLVTVNENAADAP. Residues 560-585 form a disordered region; the sequence is VPPNTFEEDDEAAEEQEEKAEDESEE. Residues 565–585 show a composition bias toward acidic residues; the sequence is FEEDDEAAEEQEEKAEDESEE.

This sequence belongs to the eIF-3 subunit D family. In terms of assembly, component of the eukaryotic translation initiation factor 3 (eIF-3) complex.

It is found in the cytoplasm. MRNA cap-binding component of the eukaryotic translation initiation factor 3 (eIF-3) complex, which is involved in protein synthesis of a specialized repertoire of mRNAs and, together with other initiation factors, stimulates binding of mRNA and methionyl-tRNAi to the 40S ribosome. The eIF-3 complex specifically targets and initiates translation of a subset of mRNAs involved in cell proliferation. In the eIF-3 complex, eif3d specifically recognizes and binds the 7-methylguanosine cap of a subset of mRNAs. This chain is Eukaryotic translation initiation factor 3 subunit D, found in Aspergillus fumigatus (strain CBS 144.89 / FGSC A1163 / CEA10) (Neosartorya fumigata).